Here is a 131-residue protein sequence, read N- to C-terminus: MASPAKKVVKKKKEKKNIPNGVAHIQATFNNTIITITDPAGNVVAWSSAGGKGFKGSRKSTPFAAQVAAEDCAKKAQDHGMRSVEVYVKGPGSGRESALRALQAAGFHVNFIRDVTPIPHNGCRPPKRRRV.

The protein belongs to the universal ribosomal protein uS11 family. In terms of assembly, part of the 30S ribosomal subunit. Interacts with proteins S7 and S18. Binds to IF-3.

Its function is as follows. Located on the platform of the 30S subunit, it bridges several disparate RNA helices of the 16S rRNA. Forms part of the Shine-Dalgarno cleft in the 70S ribosome. This is Small ribosomal subunit protein uS11 from Geobacter metallireducens (strain ATCC 53774 / DSM 7210 / GS-15).